The following is a 337-amino-acid chain: DNA-directed RNA polymerase subunit alpha (337 aa).

The interval 1–233 (MVREEIAEST…DLFVPFLHAE (233 aa)) is alpha N-terminal domain (alpha-NTD). Positions 266–337 (GIPLKYIFID…FAVDLPKVLI (72 aa)) are alpha C-terminal domain (alpha-CTD).

Belongs to the RNA polymerase alpha chain family. In plastids the minimal PEP RNA polymerase catalytic core is composed of four subunits: alpha, beta, beta', and beta''. When a (nuclear-encoded) sigma factor is associated with the core the holoenzyme is formed, which can initiate transcription.

Its subcellular location is the plastid. It localises to the chloroplast. The enzyme catalyses RNA(n) + a ribonucleoside 5'-triphosphate = RNA(n+1) + diphosphate. Its function is as follows. DNA-dependent RNA polymerase catalyzes the transcription of DNA into RNA using the four ribonucleoside triphosphates as substrates. The polypeptide is DNA-directed RNA polymerase subunit alpha (Dioscorea elephantipes (Elephant's foot yam)).